An 884-amino-acid chain; its full sequence is Translation initiation factor IF-2 (884 aa).

2 disordered regions span residues 42-62 (DVQKVTAPPTPPKGVQQQEEV) and 123-254 (EPKG…GGKK). Residues 194 to 212 (PAERREVVIPPKRKMEERA) show a composition bias toward basic and acidic residues. Residues 234 to 248 (EPETPAGGAPGAKKG) show a composition bias toward low complexity. The region spanning 384 to 553 (KRPPVVTIMG…LLQADVMDLK (170 aa)) is the tr-type G domain. Residues 393-400 (GHVDHGKT) are G1. 393-400 (GHVDHGKT) lines the GTP pocket. A G2 region spans residues 418-422 (GITQH). The interval 439–442 (DTPG) is G3. Residues 439 to 443 (DTPGH) and 493 to 496 (NKID) contribute to the GTP site. A G4 region spans residues 493–496 (NKID). A G5 region spans residues 529–531 (SAK).

The protein belongs to the TRAFAC class translation factor GTPase superfamily. Classic translation factor GTPase family. IF-2 subfamily.

Its subcellular location is the cytoplasm. One of the essential components for the initiation of protein synthesis. Protects formylmethionyl-tRNA from spontaneous hydrolysis and promotes its binding to the 30S ribosomal subunits. Also involved in the hydrolysis of GTP during the formation of the 70S ribosomal complex. The polypeptide is Translation initiation factor IF-2 (Geobacter metallireducens (strain ATCC 53774 / DSM 7210 / GS-15)).